Reading from the N-terminus, the 577-residue chain is Proline--tRNA ligase (577 aa).

This sequence belongs to the class-II aminoacyl-tRNA synthetase family. ProS type 1 subfamily. Homodimer.

It localises to the cytoplasm. The enzyme catalyses tRNA(Pro) + L-proline + ATP = L-prolyl-tRNA(Pro) + AMP + diphosphate. Catalyzes the attachment of proline to tRNA(Pro) in a two-step reaction: proline is first activated by ATP to form Pro-AMP and then transferred to the acceptor end of tRNA(Pro). As ProRS can inadvertently accommodate and process non-cognate amino acids such as alanine and cysteine, to avoid such errors it has two additional distinct editing activities against alanine. One activity is designated as 'pretransfer' editing and involves the tRNA(Pro)-independent hydrolysis of activated Ala-AMP. The other activity is designated 'posttransfer' editing and involves deacylation of mischarged Ala-tRNA(Pro). The misacylated Cys-tRNA(Pro) is not edited by ProRS. In Helicobacter pylori (strain G27), this protein is Proline--tRNA ligase.